Here is a 157-residue protein sequence, read N- to C-terminus: 2-C-methyl-D-erythritol 2,4-cyclodiphosphate synthase (157 aa).

A divalent metal cation is bound by residues Asp-8 and His-10. 4-CDP-2-C-methyl-D-erythritol 2-phosphate contacts are provided by residues 8–10 (DVH) and 34–35 (HS). His-42 serves as a coordination point for a divalent metal cation. Residues 56 to 58 (DIG), 61 to 65 (FPDTD), 100 to 106 (AQAPKMA), 132 to 135 (TTTE), Phe-139, and Arg-142 contribute to the 4-CDP-2-C-methyl-D-erythritol 2-phosphate site.

This sequence belongs to the IspF family. As to quaternary structure, homotrimer. It depends on a divalent metal cation as a cofactor.

The catalysed reaction is 4-CDP-2-C-methyl-D-erythritol 2-phosphate = 2-C-methyl-D-erythritol 2,4-cyclic diphosphate + CMP. It functions in the pathway isoprenoid biosynthesis; isopentenyl diphosphate biosynthesis via DXP pathway; isopentenyl diphosphate from 1-deoxy-D-xylulose 5-phosphate: step 4/6. Its function is as follows. Involved in the biosynthesis of isopentenyl diphosphate (IPP) and dimethylallyl diphosphate (DMAPP), two major building blocks of isoprenoid compounds. Catalyzes the conversion of 4-diphosphocytidyl-2-C-methyl-D-erythritol 2-phosphate (CDP-ME2P) to 2-C-methyl-D-erythritol 2,4-cyclodiphosphate (ME-CPP) with a corresponding release of cytidine 5-monophosphate (CMP). The polypeptide is 2-C-methyl-D-erythritol 2,4-cyclodiphosphate synthase (Pseudomonas paraeruginosa (strain DSM 24068 / PA7) (Pseudomonas aeruginosa (strain PA7))).